The following is a 91-amino-acid chain: YcgL domain-containing protein Ent638_2370 (91 aa).

The YcgL domain maps to 1-85 (MFCVIYRSAK…PPENLLKQHL (85 aa)).

The polypeptide is YcgL domain-containing protein Ent638_2370 (Enterobacter sp. (strain 638)).